Here is a 684-residue protein sequence, read N- to C-terminus: Protein SEEDLING PLASTID DEVELOPMENT 1 (684 aa).

A chloroplast-targeting transit peptide spans 1–78 (MRALNSRLVL…FSFDVRSPSS (78 aa)). The segment at 33-91 (SDSSSSFRRTRGARQRIASSKSPASSPSPVRRPSDGFSFDVRSPSSDSSISSRKSPTTA) is disordered. The span at 50-88 (ASSKSPASSPSPVRRPSDGFSFDVRSPSSDSSISSRKSP) shows a compositional bias: low complexity. Residue 220-227 (GSPGVGKT) coordinates ATP. The interval 651-684 (PRRSTKKTLTSSSPQKSADGSMGTTGTRLPFLKD) is disordered. Residues 657–667 (KTLTSSSPQKS) are compositionally biased toward low complexity.

Belongs to the ycf45 family.

It is found in the plastid. The protein localises to the chloroplast membrane. Its subcellular location is the chloroplast envelope. Functionally, required during eoplast (a highly reduced plastid type present during the degreening and dehydration stages of seed maturation) development in embryos and early stages of eoplast redifferentiation during seedling growth. This is Protein SEEDLING PLASTID DEVELOPMENT 1 from Arabidopsis thaliana (Mouse-ear cress).